A 519-amino-acid polypeptide reads, in one-letter code: Histidine--tRNA ligase (519 aa).

This sequence belongs to the class-II aminoacyl-tRNA synthetase family. Homodimer.

It is found in the cytoplasm. It carries out the reaction tRNA(His) + L-histidine + ATP = L-histidyl-tRNA(His) + AMP + diphosphate + H(+). This chain is Histidine--tRNA ligase, found in Roseobacter denitrificans (strain ATCC 33942 / OCh 114) (Erythrobacter sp. (strain OCh 114)).